We begin with the raw amino-acid sequence, 297 residues long: UDP-N-acetylenolpyruvoylglucosamine reductase (297 aa).

The FAD-binding PCMH-type domain maps to arginine 22–alanine 195. The active site involves arginine 169. Residue serine 223 is the Proton donor of the active site. Residue glutamate 293 is part of the active site.

Belongs to the MurB family. The cofactor is FAD.

The protein localises to the cytoplasm. The enzyme catalyses UDP-N-acetyl-alpha-D-muramate + NADP(+) = UDP-N-acetyl-3-O-(1-carboxyvinyl)-alpha-D-glucosamine + NADPH + H(+). Its pathway is cell wall biogenesis; peptidoglycan biosynthesis. Functionally, cell wall formation. The sequence is that of UDP-N-acetylenolpyruvoylglucosamine reductase from Chloroflexus aggregans (strain MD-66 / DSM 9485).